The chain runs to 303 residues: Bifunctional protein FolD (303 aa).

NADP(+)-binding positions include Gly175–Ser177 and Ile243.

It belongs to the tetrahydrofolate dehydrogenase/cyclohydrolase family. In terms of assembly, homodimer.

It catalyses the reaction (6R)-5,10-methylene-5,6,7,8-tetrahydrofolate + NADP(+) = (6R)-5,10-methenyltetrahydrofolate + NADPH. The catalysed reaction is (6R)-5,10-methenyltetrahydrofolate + H2O = (6R)-10-formyltetrahydrofolate + H(+). Its pathway is one-carbon metabolism; tetrahydrofolate interconversion. Functionally, catalyzes the oxidation of 5,10-methylenetetrahydrofolate to 5,10-methenyltetrahydrofolate and then the hydrolysis of 5,10-methenyltetrahydrofolate to 10-formyltetrahydrofolate. The protein is Bifunctional protein FolD of Xanthomonas euvesicatoria pv. vesicatoria (strain 85-10) (Xanthomonas campestris pv. vesicatoria).